The chain runs to 142 residues: MNKTQVPSLITSQSWYVIDAKNQKLGRMSTHISNILRGKNKPSYTPYLDTGDYVIVINSSEVSVSGNKTTQKLYRRHSGQPGGLKVETFEQLQTRLPNRIVEKSVKGMLPKGPLGRKLFTKLKVYPGPSHPHAAQKPQEYMV.

It belongs to the universal ribosomal protein uL13 family. As to quaternary structure, part of the 50S ribosomal subunit.

It is found in the plastid. It localises to the chloroplast. The chain is Large ribosomal subunit protein uL13c from Porphyra purpurea (Red seaweed).